The chain runs to 308 residues: Olfactory receptor 4E2 (308 aa).

Over Met1 to Glu24 the chain is Extracellular. An N-linked (GlcNAc...) asparagine glycan is attached at Asn5. Residues Ile25–Ile45 form a helical membrane-spanning segment. At Val46–Asn57 the chain is on the cytoplasmic side. The chain crosses the membrane as a helical span at residues Pro58–Val78. Over Pro79–Cys97 the chain is Extracellular. A disulfide bridge connects residues Cys97 and Cys179. A helical membrane pass occupies residues Ile98 to Met118. Positions 105 and 109 each coordinate Cu cation. Over Ala119–Gln143 the chain is Cytoplasmic. Residues Leu144–Ile164 form a helical membrane-spanning segment. Residues Arg165–Gly204 lie on the Extracellular side of the membrane. The helical transmembrane segment at Thr205–Leu225 threads the bilayer. The Cytoplasmic segment spans residues Arg226–Ala236. A helical membrane pass occupies residues Leu237–Leu257. Over Tyr258–Asp268 the chain is Extracellular. Arg260 is a binding site for Cu cation. The chain crosses the membrane as a helical span at residues Lys269–Leu289. Residues Arg290–Ser308 are Cytoplasmic-facing.

This sequence belongs to the G-protein coupled receptor 1 family. In terms of tissue distribution, expressed in olfactory epithelium, specifically in the olfactory sensory neurons of the septal organ.

The protein resides in the cell membrane. Copper binding enhances receptor activity in response to odorant binding. Functionally, olfactory receptor that is activated by the binding of organosulfur odorants with thioether groups such as (methylthio)methanethiol (MTMT) and bis(methylthiomethyl) disulfide. Also binds odorants cis-cyclooctene and tert-butyl mercaptan. The activity of this receptor is mediated by G proteins which activate adenylyl cyclase (Potential). This is Olfactory receptor 4E2 from Mus musculus (Mouse).